The sequence spans 242 residues: Ubiquinone biosynthesis O-methyltransferase (242 aa).

The S-adenosyl-L-methionine site is built by Arg-44, Gly-64, Asp-85, and Met-129.

It belongs to the methyltransferase superfamily. UbiG/COQ3 family.

It carries out the reaction a 3-demethylubiquinol + S-adenosyl-L-methionine = a ubiquinol + S-adenosyl-L-homocysteine + H(+). The catalysed reaction is a 3-(all-trans-polyprenyl)benzene-1,2-diol + S-adenosyl-L-methionine = a 2-methoxy-6-(all-trans-polyprenyl)phenol + S-adenosyl-L-homocysteine + H(+). The protein operates within cofactor biosynthesis; ubiquinone biosynthesis. In terms of biological role, O-methyltransferase that catalyzes the 2 O-methylation steps in the ubiquinone biosynthetic pathway. The polypeptide is Ubiquinone biosynthesis O-methyltransferase (Salmonella choleraesuis (strain SC-B67)).